Reading from the N-terminus, the 315-residue chain is MIGSFLTRGLVMVFGYAYPAYECYKAVEKNKPEMQQLRFWCQYWILVAALTIFERVGDALASWVPLYCEAKLAFFIYLWFPKTRGTTYVYDSFFQPYVAKHENEIDRSLIELRTKAGDLAVIYCRKAVSYGQTRIVEILHFVALQSTPKPKPKEKKQAAAPEEEEQKQPDLKATSQAASSNPQVRLQSKKPQLVTKEPISPKPLSSPRKQQQLQTETKEAKASVSQTKLTTLTPPGPPPPPPPPPPSPTTAAKRNADPAQPSPTEAEEASQTVAALPEPASEIQRASSSKETIMEETLRITRGSLRKARSAGAPR.

Residues 148 to 315 (PKPKPKEKKQ…RKARSAGAPR (168 aa)) form a disordered region. The span at 173 to 190 (ATSQAASSNPQVRLQSKK) shows a compositional bias: polar residues. A compositionally biased stretch (pro residues) spans 234–248 (PPGPPPPPPPPPPSP).

It belongs to the DP1 family.

The sequence is that of HVA22-like protein h (HVA22H) from Arabidopsis thaliana (Mouse-ear cress).